Consider the following 804-residue polypeptide: Leucine--tRNA ligase (804 aa).

The 'HIGH' region signature appears at 40–51; that stretch reads PYPSGAGLHVGH. The 'KMSKS' region signature appears at 576 to 580; that stretch reads KMSKS. Lysine 579 serves as a coordination point for ATP.

Belongs to the class-I aminoacyl-tRNA synthetase family.

The protein resides in the cytoplasm. It carries out the reaction tRNA(Leu) + L-leucine + ATP = L-leucyl-tRNA(Leu) + AMP + diphosphate. The chain is Leucine--tRNA ligase from Staphylococcus epidermidis (strain ATCC 35984 / DSM 28319 / BCRC 17069 / CCUG 31568 / BM 3577 / RP62A).